The primary structure comprises 512 residues: Cytochrome P450 1A1 (512 aa).

The mitochondrial targeting signal stretch occupies residues 29–40; it reads SRPRVPKGLKNP. A glycan (O-linked (GlcNAc) serine) is linked at Ser67. Position 224 (Phe224) interacts with substrate. Cys457 is a binding site for heme.

The protein belongs to the cytochrome P450 family. Interacts with cytosolic chaperones HSP70 and HSP90; this interaction is required for initial targeting to mitochondria. Interacts (via mitochondrial targeting signal) with TOMM40 (via N-terminus); this interaction is required for translocation across the mitochondrial outer membrane. Requires heme as cofactor.

It is found in the endoplasmic reticulum membrane. Its subcellular location is the mitochondrion inner membrane. The protein resides in the microsome membrane. It localises to the cytoplasm. It catalyses the reaction an organic molecule + reduced [NADPH--hemoprotein reductase] + O2 = an alcohol + oxidized [NADPH--hemoprotein reductase] + H2O + H(+). The enzyme catalyses estrone + reduced [NADPH--hemoprotein reductase] + O2 = 2-hydroxyestrone + oxidized [NADPH--hemoprotein reductase] + H2O + H(+). The catalysed reaction is estrone + reduced [NADPH--hemoprotein reductase] + O2 = 4-hydroxyestrone + oxidized [NADPH--hemoprotein reductase] + H2O + H(+). It carries out the reaction estrone + reduced [NADPH--hemoprotein reductase] + O2 = 6alpha-hydroxyestrone + oxidized [NADPH--hemoprotein reductase] + H2O + H(+). It catalyses the reaction estrone + reduced [NADPH--hemoprotein reductase] + O2 = 15alpha-hydroxyestrone + oxidized [NADPH--hemoprotein reductase] + H2O + H(+). The enzyme catalyses estrone + reduced [NADPH--hemoprotein reductase] + O2 = 16alpha-hydroxyestrone + oxidized [NADPH--hemoprotein reductase] + H2O + H(+). The catalysed reaction is 17beta-estradiol + reduced [NADPH--hemoprotein reductase] + O2 = 2-hydroxy-17beta-estradiol + oxidized [NADPH--hemoprotein reductase] + H2O + H(+). It carries out the reaction 17beta-estradiol + reduced [NADPH--hemoprotein reductase] + O2 = 4-hydroxy-17beta-estradiol + oxidized [NADPH--hemoprotein reductase] + H2O + H(+). It catalyses the reaction 17beta-estradiol + reduced [NADPH--hemoprotein reductase] + O2 = 6alpha-hydroxy-17beta-estradiol + oxidized [NADPH--hemoprotein reductase] + H2O + H(+). The enzyme catalyses 17beta-estradiol + reduced [NADPH--hemoprotein reductase] + O2 = 7alpha-hydroxy-17beta-estradiol + oxidized [NADPH--hemoprotein reductase] + H2O + H(+). The catalysed reaction is 17beta-estradiol + reduced [NADPH--hemoprotein reductase] + O2 = 15alpha-hydroxy-17beta-estradiol + oxidized [NADPH--hemoprotein reductase] + H2O + H(+). It carries out the reaction (5Z,8Z,11Z)-eicosatrienoate + reduced [NADPH--hemoprotein reductase] + O2 = 19-hydroxy-(5Z,8Z,11Z)-eicosatrienoate + oxidized [NADPH--hemoprotein reductase] + H2O + H(+). It catalyses the reaction (5Z,8Z,11Z,14Z)-eicosatetraenoate + reduced [NADPH--hemoprotein reductase] + O2 = 16-hydroxy-(5Z,8Z,11Z,14Z)-eicosatetraenoate + oxidized [NADPH--hemoprotein reductase] + H2O + H(+). The enzyme catalyses (5Z,8Z,11Z,14Z)-eicosatetraenoate + reduced [NADPH--hemoprotein reductase] + O2 = 17-hydroxy-(5Z,8Z,11Z,14Z)-eicosatetraenoate + oxidized [NADPH--hemoprotein reductase] + H2O + H(+). The catalysed reaction is (5Z,8Z,11Z,14Z)-eicosatetraenoate + reduced [NADPH--hemoprotein reductase] + O2 = 18-hydroxy-(5Z,8Z,11Z,14Z)-eicosatetraenoate + oxidized [NADPH--hemoprotein reductase] + H2O + H(+). It carries out the reaction (5Z,8Z,11Z,14Z)-eicosatetraenoate + reduced [NADPH--hemoprotein reductase] + O2 = 19-hydroxy-(5Z,8Z,11Z,14Z)-eicosatetraenoate + oxidized [NADPH--hemoprotein reductase] + H2O + H(+). It catalyses the reaction (5Z,8Z,11Z,14Z,17Z)-eicosapentaenoate + reduced [NADPH--hemoprotein reductase] + O2 = 19-hydroxy-(5Z,8Z,11Z,14Z,17Z)-eicosapentaenoate + oxidized [NADPH--hemoprotein reductase] + H2O + H(+). The enzyme catalyses (5Z,8Z,11Z,14Z)-eicosatetraenoate + reduced [NADPH--hemoprotein reductase] + O2 = (8R,9S)-epoxy-(5Z,11Z,14Z)-eicosatrienoate + oxidized [NADPH--hemoprotein reductase] + H2O + H(+). The catalysed reaction is (5Z,8Z,11Z,14Z)-eicosatetraenoate + reduced [NADPH--hemoprotein reductase] + O2 = (11R,12S)-epoxy-(5Z,8Z,14Z)-eicosatrienoate + oxidized [NADPH--hemoprotein reductase] + H2O + H(+). It carries out the reaction (5Z,8Z,11Z,14Z)-eicosatetraenoate + reduced [NADPH--hemoprotein reductase] + O2 = (14S,15R)-epoxy-(5Z,8Z,11Z)-eicosatrienoate + oxidized [NADPH--hemoprotein reductase] + H2O + H(+). It catalyses the reaction (5Z,8Z,11Z,14Z)-eicosatetraenoate + reduced [NADPH--hemoprotein reductase] + O2 = (14R,15S)-epoxy-(5Z,8Z,11Z)-eicosatrienoate + oxidized [NADPH--hemoprotein reductase] + H2O + H(+). The enzyme catalyses (5Z,8Z,11Z,14Z,17Z)-eicosapentaenoate + reduced [NADPH--hemoprotein reductase] + O2 = (17R,18S)-epoxy-(5Z,8Z,11Z,14Z)-eicosatetraenoate + oxidized [NADPH--hemoprotein reductase] + H2O + H(+). The catalysed reaction is (4Z,7Z,10Z,13Z,16Z,19Z)-docosahexaenoate + reduced [NADPH--hemoprotein reductase] + O2 = (19S,20R)-epoxy-(4Z,7Z,10Z,13Z,16Z)-docosapentaenoate + oxidized [NADPH--hemoprotein reductase] + H2O + H(+). It carries out the reaction (4Z,7Z,10Z,13Z,16Z,19Z)-docosahexaenoate + reduced [NADPH--hemoprotein reductase] + O2 = (19R,20S)-epoxy-(4Z,7Z,10Z,13Z,16Z)-docosapentaenoate + oxidized [NADPH--hemoprotein reductase] + H2O + H(+). It catalyses the reaction all-trans-retinol + reduced [NADPH--hemoprotein reductase] + O2 = all-trans-retinal + oxidized [NADPH--hemoprotein reductase] + 2 H2O + H(+). The enzyme catalyses all-trans-retinal + reduced [NADPH--hemoprotein reductase] + O2 = all-trans-retinoate + oxidized [NADPH--hemoprotein reductase] + H2O + 2 H(+). The catalysed reaction is (13S)-hydroperoxy-(9Z,11E)-octadecadienoate = 13-oxo-(9Z,11E)-octadecadienoate + H2O. It carries out the reaction (12S)-hydroperoxy-(5Z,8Z,10E,14Z)-eicosatetraenoate = 12-oxo-(5Z,8Z,10E,14Z)-eicosatetraenoate + H2O. It catalyses the reaction (15S)-hydroperoxy-(5Z,8Z,11Z,13E)-eicosatetraenoate = 15-oxo-(5Z,8Z,11Z,13E)-eicosatetraenoate + H2O. The enzyme catalyses (5S)-hydroperoxy-(6E,8Z,11Z,14Z)-eicosatetraenoate = 5-oxo-(6E,8Z,11Z,14Z)-eicosatetraenoate + H2O. Its pathway is steroid hormone biosynthesis. It functions in the pathway lipid metabolism; fatty acid metabolism. It participates in cofactor metabolism; retinol metabolism. Its function is as follows. A cytochrome P450 monooxygenase involved in the metabolism of various endogenous substrates, including fatty acids, steroid hormones and vitamins. Mechanistically, uses molecular oxygen inserting one oxygen atom into a substrate, and reducing the second into a water molecule, with two electrons provided by NADPH via cytochrome P450 reductase (CPR; NADPH-ferrihemoprotein reductase). Catalyzes the hydroxylation of carbon-hydrogen bonds. Exhibits high catalytic activity for the formation of hydroxyestrogens from estrone (E1) and 17beta-estradiol (E2), namely 2-hydroxy E1 and E2, as well as D-ring hydroxylated E1 and E2 at the C15alpha and C16alpha positions. Displays different regioselectivities for polyunsaturated fatty acids (PUFA) hydroxylation. Catalyzes the epoxidation of double bonds of certain PUFA. Converts arachidonic acid toward epoxyeicosatrienoic acid (EET) regioisomers, 8,9-, 11,12-, and 14,15-EET, that function as lipid mediators in the vascular system. Displays an absolute stereoselectivity in the epoxidation of eicosapentaenoic acid (EPA) producing the 17(R),18(S) enantiomer. May play an important role in all-trans retinoic acid biosynthesis in extrahepatic tissues. Catalyzes two successive oxidative transformation of all-trans retinol to all-trans retinal and then to the active form all-trans retinoic acid. May also participate in eicosanoids metabolism by converting hydroperoxide species into oxo metabolites (lipoxygenase-like reaction, NADPH-independent). In Macaca fascicularis (Crab-eating macaque), this protein is Cytochrome P450 1A1 (CYP1A1).